A 477-amino-acid chain; its full sequence is Trigger factor (477 aa).

The PPIase FKBP-type domain occupies 169–254 (EDRVTIDYLG…VKEVAKPNEL (86 aa)). The disordered stretch occupies residues 435–477 (VSKEELTAEDEDAASEAKPAKKAAPKKKAAPKKKADEGKSEEA). A compositionally biased stretch (basic residues) spans 454-466 (AKKAAPKKKAAPK). Positions 467-477 (KKADEGKSEEA) are enriched in basic and acidic residues.

It belongs to the FKBP-type PPIase family. Tig subfamily.

The protein localises to the cytoplasm. The catalysed reaction is [protein]-peptidylproline (omega=180) = [protein]-peptidylproline (omega=0). Its function is as follows. Involved in protein export. Acts as a chaperone by maintaining the newly synthesized protein in an open conformation. Functions as a peptidyl-prolyl cis-trans isomerase. This is Trigger factor from Brucella anthropi (strain ATCC 49188 / DSM 6882 / CCUG 24695 / JCM 21032 / LMG 3331 / NBRC 15819 / NCTC 12168 / Alc 37) (Ochrobactrum anthropi).